The following is a 204-amino-acid chain: Large ribosomal subunit protein bL25 (204 aa).

The protein belongs to the bacterial ribosomal protein bL25 family. CTC subfamily. Part of the 50S ribosomal subunit; part of the 5S rRNA/L5/L18/L25 subcomplex. Contacts the 5S rRNA. Binds to the 5S rRNA independently of L5 and L18.

In terms of biological role, this is one of the proteins that binds to the 5S RNA in the ribosome where it forms part of the central protuberance. The chain is Large ribosomal subunit protein bL25 from Pseudomonas syringae pv. syringae (strain B728a).